The following is a 232-amino-acid chain: U2 small nuclear ribonucleoprotein B'' (232 aa).

The 80-residue stretch at 10–89 (QTVYLRNLNE…KRMRVQYAKT (80 aa)) folds into the RRM 1 domain. The tract at residues 92 to 159 (DCLATEDGST…QEPPAPPNNI (68 aa)) is disordered. Residues 108–123 (KKQEEKAAEKKRRAEE) are compositionally biased toward basic and acidic residues. The span at 127–151 (SGPNAAAQSNGTGYQASRLGKTSQE) shows a compositional bias: polar residues. Positions 158 to 232 (NILFIQNLPA…NPMAISYAKK (75 aa)) constitute an RRM 2 domain.

The protein belongs to the RRM U1 A/B'' family. As to quaternary structure, component of the spliceosome where it is associated with snRNP U2.

It is found in the nucleus. The protein resides in the cajal body. It localises to the nucleoplasm. Its subcellular location is the cytoplasm. Its function is as follows. Involved in nuclear pre-mRNA splicing. This is U2 small nuclear ribonucleoprotein B'' from Oryza sativa subsp. indica (Rice).